A 421-amino-acid chain; its full sequence is MEEENVTSSPSTPVHRLRHRRRSNEVVTDGDKVNASPLLVNDRNKYKSFMVRTYSTLWMIGGFVLVVYMGHLYITAMVVVIQIFMAKELFNLLRKAPEDKCLPYIKQLNWHFFFTAMLFVYGRILSQRLANTMTADQFFYRLVSGLIKYHMAICYLLYIIGFMWFILTLKKKMYKYQFGQYAWTHMILIVVFTQSSFTVANIFEGIFWFLLPASLIIINDIFAYIFGFFFGRTPLIKLSPKKTWEGFIGASVTTIISAFVLANILGRFPWLTCPRQDLSTGWLQCDADPLFKPEPFALPAWIPEWFPWKEMTILPVQWHALCLGLFASIIAPFGGFFASGFKRAFKIKDFGDSIPGHGGITDRMDCQMVMAVFAYIYLQSFIVSQSVSVDKILDQILTNLTFEEQQALFVKLGQMLKDKLS.

Position 1 is an N-acetylmethionine (Met-1). The segment covering 1–12 has biased composition (polar residues); that stretch reads MEEENVTSSPST. The interval 1-26 is disordered; sequence MEEENVTSSPSTPVHRLRHRRRSNEV. Transmembrane regions (helical) follow at residues 60–80, 102–122, 149–169, 183–203, 206–226, 246–266, 321–341, and 369–389; these read IGGF…MVVV, LPYI…FVYG, YHMA…ILTL, WTHM…ANIF, IFWF…AYIF, GFIG…NILG, LCLG…ASGF, and VMAV…SVSV.

This sequence belongs to the CDS family. Mg(2+) serves as cofactor.

It is found in the membrane. The enzyme catalyses a 1,2-diacyl-sn-glycero-3-phosphate + CTP + H(+) = a CDP-1,2-diacyl-sn-glycerol + diphosphate. Its pathway is phospholipid metabolism; CDP-diacylglycerol biosynthesis; CDP-diacylglycerol from sn-glycerol 3-phosphate: step 3/3. May be involved in the synthesis of minor phospholipids and in modulation of IP3-mediated signal transduction. This chain is Phosphatidate cytidylyltransferase 1, found in Arabidopsis thaliana (Mouse-ear cress).